The sequence spans 328 residues: Carbonic anhydrase, chloroplastic (328 aa).

Residues 1–15 (MSTSSINGFSLSSLS) are compositionally biased toward low complexity. A disordered region spans residues 1–26 (MSTSSINGFSLSSLSPAKTSTKRTTL). The transit peptide at 1–70 (MSTSSINGFS…IITPVLREEM (70 aa)) directs the protein to the chloroplast.

This sequence belongs to the beta-class carbonic anhydrase family. Homohexamer.

The protein localises to the plastid. It localises to the chloroplast stroma. The catalysed reaction is hydrogencarbonate + H(+) = CO2 + H2O. Its function is as follows. Reversible hydration of carbon dioxide. The sequence is that of Carbonic anhydrase, chloroplastic from Pisum sativum (Garden pea).